The primary structure comprises 81 residues: High-potential iron-sulfur protein (81 aa).

[4Fe-4S] cluster-binding residues include Cys-43, Cys-46, Cys-59, and Cys-73.

It belongs to the high-potential iron-sulfur protein (HiPIP) family. In terms of assembly, homodimer.

Functionally, specific class of high-redox-potential 4Fe-4S ferredoxins. Functions in anaerobic electron transport in most purple and in some other photosynthetic bacteria and in at least one genus (Paracoccus) of halophilic, denitrifying bacteria. This chain is High-potential iron-sulfur protein (hip), found in Thiococcus pfennigii (Thiocapsa pfennigii).